The sequence spans 100 residues: Transcription elongation factor A protein-like 7 (100 aa).

The segment covering 1 to 32 (MQKPCKENEGKPKCSVPKREEKRPYGEFERQQ) has biased composition (basic and acidic residues). The segment at 1–34 (MQKPCKENEGKPKCSVPKREEKRPYGEFERQQTE) is disordered. Positions 60-88 (EEMTREGDEMERCLEEIRGLRKKFRALHS) form a coiled coil.

This sequence belongs to the TFS-II family. TFA subfamily. In terms of tissue distribution, highly expressed in normal and fetal brain tissues, and weakly expressed in uterus and ovary. Down-regulated in epithelial ovarian, cervical, prostate, breast, brain and lung cancer cell lines and in brain and ovarian tumors.

It is found in the nucleus. Functionally, plays a role in the negative regulation of NF-kappa-B signaling at the basal level by modulating transcriptional activity of NF-kappa-B on its target gene promoters. Associates with cyclin D1 promoter containing Myc E-box sequence and transcriptionally represses cyclin D1 expression. Regulates telomerase reverse transcriptase expression and telomerase activity in both ALT (alternative lengthening of telomeres)and telomerase-positive cell lines. The polypeptide is Transcription elongation factor A protein-like 7 (TCEAL7) (Homo sapiens (Human)).